Here is a 300-residue protein sequence, read N- to C-terminus: Manganese-binding lipoprotein MntA (300 aa).

An N-terminal signal peptide occupies residues 1 to 19; it reads MKKVCFSFVIMVIALIAAG. Cysteine 20 carries the N-palmitoyl cysteine lipid modification. The S-diacylglycerol cysteine moiety is linked to residue cysteine 20. Positions 68, 130, 196, and 271 each coordinate Mn(2+).

This sequence belongs to the bacterial solute-binding protein 9 family.

The protein resides in the cell membrane. In terms of biological role, probably part of ATP-binding cassette (ABC) transport system MntABCD involved in manganese import. Binds manganese and delivers it to the membrane permease for translocation into the cytoplasm. The sequence is that of Manganese-binding lipoprotein MntA (mntA) from Halalkalibacterium halodurans (strain ATCC BAA-125 / DSM 18197 / FERM 7344 / JCM 9153 / C-125) (Bacillus halodurans).